The primary structure comprises 347 residues: Metacaspase-2 (347 aa).

Residues 1-70 (MCSLITQLCD…QPWVATPLPG (70 aa)) form a regulates substrate access to the active site region. His-158 is a catalytic residue. Ca(2+) contacts are provided by Asp-173, Asp-189, and Asp-190. The active site involves Cys-213. Position 220 (Asp-220) interacts with Ca(2+).

Belongs to the peptidase C14B family. As to quaternary structure, monomer. Post-translationally, auto-proteolytic cleavage of the propeptide after Lys-55 and between the large and small subunits after Lys-268 is required for catalytic activity towards large protein substrates but is dispensable towards small oligopeptide substrates. After processing, the propeptide and the large and small subunits remain associated by non-covalent bonds. In vivo, the unprocessed enzyme appears to be the predominant form.

The protein localises to the recycling endosome. Activated by Ca(2+). In response to calcium binding, the 280-loop, the 280-loop, a disordered loop consisting of residues 269-275, undergoes a conformational change which stabilizes substrates in the active site. The binding to the substrate triggers the release of the N-terminal region resulting in the activation of the enzyme. Proteolytic cleavage is required for catalytic activity towards large protein substrates. Functionally, cysteine protease that cleaves specifically after arginine or lysine residues. This chain is Metacaspase-2, found in Trypanosoma brucei brucei.